Reading from the N-terminus, the 90-residue chain is Auxin-responsive protein SAUR24 (90 aa).

This sequence belongs to the ARG7 family.

Its subcellular location is the cell membrane. Functionally, functions as a positive effector of cell expansion through modulation of auxin transport. The sequence is that of Auxin-responsive protein SAUR24 from Arabidopsis thaliana (Mouse-ear cress).